Consider the following 279-residue polypeptide: Malonyl-[acyl-carrier protein] O-methyltransferase (279 aa).

Belongs to the methyltransferase superfamily.

It carries out the reaction malonyl-[ACP] + S-adenosyl-L-methionine = malonyl-[ACP] methyl ester + S-adenosyl-L-homocysteine. Its pathway is cofactor biosynthesis; biotin biosynthesis. Functionally, converts the free carboxyl group of a malonyl-thioester to its methyl ester by transfer of a methyl group from S-adenosyl-L-methionine (SAM). It allows to synthesize pimeloyl-ACP via the fatty acid synthetic pathway. This is Malonyl-[acyl-carrier protein] O-methyltransferase from Hahella chejuensis (strain KCTC 2396).